Here is a 398-residue protein sequence, read N- to C-terminus: Elongation factor Tu (398 aa).

The tr-type G domain occupies 10–207 (KPHVNIGTIG…TVDDYIPDPE (198 aa)). Residues 19-26 (GHVDHGKT) form a G1 region. 19-26 (GHVDHGKT) is a GTP binding site. Thr26 is a Mg(2+) binding site. The G2 stretch occupies residues 63–67 (GITIN). Positions 84 to 87 (DAPG) are G3. Residues 84-88 (DAPGH) and 139-142 (NKVD) contribute to the GTP site. The G4 stretch occupies residues 139-142 (NKVD). The tract at residues 177–179 (SAL) is G5.

Belongs to the TRAFAC class translation factor GTPase superfamily. Classic translation factor GTPase family. EF-Tu/EF-1A subfamily. In terms of assembly, monomer.

The protein localises to the cytoplasm. The enzyme catalyses GTP + H2O = GDP + phosphate + H(+). In terms of biological role, GTP hydrolase that promotes the GTP-dependent binding of aminoacyl-tRNA to the A-site of ribosomes during protein biosynthesis. This is Elongation factor Tu from Streptococcus mutans serotype c (strain ATCC 700610 / UA159).